Consider the following 80-residue polypeptide: Sulfur carrier protein TusA (80 aa).

C17 acts as the Cysteine persulfide intermediate in catalysis.

This sequence belongs to the sulfur carrier protein TusA family.

The protein localises to the cytoplasm. Functionally, sulfur carrier protein which probably makes part of a sulfur-relay system. This is Sulfur carrier protein TusA from Pseudomonas putida (strain W619).